Reading from the N-terminus, the 103-residue chain is Small ribosomal subunit protein uS10 (103 aa).

This sequence belongs to the universal ribosomal protein uS10 family. As to quaternary structure, part of the 30S ribosomal subunit.

Its function is as follows. Involved in the binding of tRNA to the ribosomes. This Laribacter hongkongensis (strain HLHK9) protein is Small ribosomal subunit protein uS10.